A 214-amino-acid polypeptide reads, in one-letter code: Potassium/proton antiporter CemA (214 aa).

Helical transmembrane passes span 92–112 (ILHLSTNIICFIIFRGYSILG) and 174–194 (IISGLVSTFPVILDTIFKYWI).

Belongs to the CemA family.

The protein localises to the plastid. Its subcellular location is the chloroplast inner membrane. It catalyses the reaction K(+)(in) + H(+)(out) = K(+)(out) + H(+)(in). Functionally, contributes to K(+)/H(+) antiport activity by supporting proton efflux to control proton extrusion and homeostasis in chloroplasts in a light-dependent manner to modulate photosynthesis. Prevents excessive induction of non-photochemical quenching (NPQ) under continuous-light conditions. Indirectly promotes efficient inorganic carbon uptake into chloroplasts. The sequence is that of Potassium/proton antiporter CemA from Oenothera argillicola (Appalachian evening primrose).